The following is a 129-amino-acid chain: Fluoride-specific ion channel FluC (129 aa).

4 consecutive transmembrane segments (helical) span residues 1–21 (MLMK…LGSA), 35–55 (GGLP…IGFI), 71–91 (LFLV…IFEN), and 105–125 (AYLA…TFFA). Residues Gly79 and Thr82 each coordinate Na(+).

The protein belongs to the fluoride channel Fluc/FEX (TC 1.A.43) family.

The protein localises to the cell inner membrane. The catalysed reaction is fluoride(in) = fluoride(out). Na(+) is not transported, but it plays an essential structural role and its presence is essential for fluoride channel function. Fluoride-specific ion channel. Important for reducing fluoride concentration in the cell, thus reducing its toxicity. This Chlorobium phaeobacteroides (strain DSM 266 / SMG 266 / 2430) protein is Fluoride-specific ion channel FluC.